The following is a 169-amino-acid chain: NADH-quinone oxidoreductase subunit B (169 aa).

[4Fe-4S] cluster-binding residues include Cys42, Cys43, Cys107, and Cys136.

The protein belongs to the complex I 20 kDa subunit family. In terms of assembly, NDH-1 is composed of 14 different subunits. Subunits NuoB, C, D, E, F, and G constitute the peripheral sector of the complex. [4Fe-4S] cluster serves as cofactor.

It is found in the cell inner membrane. The catalysed reaction is a quinone + NADH + 5 H(+)(in) = a quinol + NAD(+) + 4 H(+)(out). Functionally, NDH-1 shuttles electrons from NADH, via FMN and iron-sulfur (Fe-S) centers, to quinones in the respiratory chain. The immediate electron acceptor for the enzyme in this species is believed to be ubiquinone. Couples the redox reaction to proton translocation (for every two electrons transferred, four hydrogen ions are translocated across the cytoplasmic membrane), and thus conserves the redox energy in a proton gradient. This Wolinella succinogenes (strain ATCC 29543 / DSM 1740 / CCUG 13145 / JCM 31913 / LMG 7466 / NCTC 11488 / FDC 602W) (Vibrio succinogenes) protein is NADH-quinone oxidoreductase subunit B.